Here is a 396-residue protein sequence, read N- to C-terminus: DNA excision repair protein ERCC-8 (396 aa).

WD repeat units lie at residues 33 to 73 (NKDR…LYDL), 88 to 129 (CSIG…VWDT), 133 to 173 (QTAD…LCDL), 177 to 216 (SCSHILQGHRQEILAVSWSPRYDYILATASADSRVKLWDV), 235 to 274 (QAVESANTAHNGKVNGLCFTSDGLHLLTVGTDNRMRLWNS), 281 to 321 (LVNY…VYTV), and 325 to 363 (EQITMLKGHYKTVDCCVFQSNFQELYSGSRDCNILAWVP). Residues 371 to 396 (DDDETTTKSQLNPAFEDAWSSSDEEG) form a disordered region. 3 positions are modified to phosphoserine: serine 390, serine 391, and serine 392.

Part of the CSA complex (also named DCX(ERCC8) complex), a DCX E3 ubiquitin-protein ligase complex containing ERCC8, RBX1, DDB1 and CUL4A; the CSA complex interacts with RNA polymerase II; upon UV irradiation it interacts with the COP9 signalosome and preferentially with the hyperphosphorylated form of RNA polymerase II. Interacts with ERCC6/CSB (via CIM motif); promoting recruitment to lesion-stalled RNA polymerase II (Pol II). Interacts with KIAA1530/UVSSA. Interacts with a subunit of RNA polymerase II TFIIH.

Its subcellular location is the nucleus. The protein resides in the chromosome. It is found in the nucleus matrix. It participates in protein modification; protein ubiquitination. In terms of biological role, substrate-recognition component of the CSA complex, a DCX (DDB1-CUL4-X-box) E3 ubiquitin-protein ligase complex, involved in transcription-coupled nucleotide excision repair (TC-NER), a process during which RNA polymerase II-blocking lesions are rapidly removed from the transcribed strand of active genes. Following recruitment to lesion-stalled RNA polymerase II (Pol II), the CSA complex mediates ubiquitination of Pol II subunit POLR2A/RPB1 at 'Lys-1268', a critical TC-NER checkpoint, governing RNA Pol II stability and initiating DNA damage excision by TFIIH recruitment. The CSA complex also promotes the ubiquitination and subsequent proteasomal degradation of ERCC6/CSB in a UV-dependent manner; ERCC6 degradation is essential for the recovery of RNA synthesis after transcription-coupled repair. Also plays a role in DNA double-strand breaks (DSSBs) repair by non-homologous end joining (NHEJ). The sequence is that of DNA excision repair protein ERCC-8 from Homo sapiens (Human).